Reading from the N-terminus, the 188-residue chain is Putative 3-methyladenine DNA glycosylase (188 aa).

This sequence belongs to the DNA glycosylase MPG family.

The protein is Putative 3-methyladenine DNA glycosylase of Ehrlichia ruminantium (strain Welgevonden).